The primary structure comprises 358 residues: Methylthioribose-1-phosphate isomerase (358 aa).

Residues 54 to 56 (RGA), arginine 96, and glutamine 205 each bind substrate. The Proton donor role is filled by aspartate 246. A substrate-binding site is contributed by 256-257 (AK).

This sequence belongs to the eIF-2B alpha/beta/delta subunits family. MtnA subfamily.

The enzyme catalyses 5-(methylsulfanyl)-alpha-D-ribose 1-phosphate = 5-(methylsulfanyl)-D-ribulose 1-phosphate. Its pathway is amino-acid biosynthesis; L-methionine biosynthesis via salvage pathway; L-methionine from S-methyl-5-thio-alpha-D-ribose 1-phosphate: step 1/6. In terms of biological role, catalyzes the interconversion of methylthioribose-1-phosphate (MTR-1-P) into methylthioribulose-1-phosphate (MTRu-1-P). This chain is Methylthioribose-1-phosphate isomerase, found in Pseudomonas entomophila (strain L48).